Here is a 272-residue protein sequence, read N- to C-terminus: Indole-3-glycerol phosphate synthase (272 aa).

It belongs to the TrpC family.

The catalysed reaction is 1-(2-carboxyphenylamino)-1-deoxy-D-ribulose 5-phosphate + H(+) = (1S,2R)-1-C-(indol-3-yl)glycerol 3-phosphate + CO2 + H2O. It functions in the pathway amino-acid biosynthesis; L-tryptophan biosynthesis; L-tryptophan from chorismate: step 4/5. The chain is Indole-3-glycerol phosphate synthase from Mycolicibacterium smegmatis (strain ATCC 700084 / mc(2)155) (Mycobacterium smegmatis).